A 124-amino-acid chain; its full sequence is Fluoride-specific ion channel FluC (124 aa).

A run of 4 helical transmembrane segments spans residues 1–21 (MIPLILAVSAGGVAGTLLRFA), 38–58 (TLAVNIVGCLLIGVLYGLFLV), 69–89 (GLIVGFLGGLTTFSSFSLDTV), and 97–117 (VALALGYAALSVFGGLLATWA). The Na(+) site is built by glycine 76 and threonine 79.

The protein belongs to the fluoride channel Fluc/FEX (TC 1.A.43) family.

The protein localises to the cell inner membrane. The enzyme catalyses fluoride(in) = fluoride(out). Na(+) is not transported, but it plays an essential structural role and its presence is essential for fluoride channel function. Its function is as follows. Fluoride-specific ion channel. Important for reducing fluoride concentration in the cell, thus reducing its toxicity. This Pseudomonas fluorescens (strain ATCC BAA-477 / NRRL B-23932 / Pf-5) protein is Fluoride-specific ion channel FluC.